Here is a 383-residue protein sequence, read N- to C-terminus: Cysteine protease StiP (383 aa).

Belongs to the cysteine protease StiP family. Is probably processed via an autocatalytic removal of a proregion of about 100 amino acids.

Is inhibited by bromopyruvate in vitro. Activity is not affected by the presence of tellurite. Its function is as follows. Cysteine protease that may play a role in regulating cell morphology in response to stressful conditions which likely cause oxidative damage. Appears to catalyze its own cleavage, which probably leads to its activation. The protein is Cysteine protease StiP (stiP) of Acinetobacter baylyi (strain ATCC 33305 / BD413 / ADP1).